Reading from the N-terminus, the 158-residue chain is Respiratory supercomplex factor 1, mitochondrial (158 aa).

In terms of domain architecture, HIG1 spans 5–96 (PSSFDVEDAD…KDKYDQKKKE (92 aa)). 2 helical membrane-spanning segments follow: residues 32-54 (PLVPIGTLLTTGAVILAAQNMRI) and 64-86 (FRWRVGLQAATLAALVAGSFIYG). The stretch at 99–158 (MKEKAKLREQLWIKELERRDAEAQDRKKKAEAARLKTKENEAAIQKLEQELKELEAKASK) forms a coiled coil.

It belongs to the RCF1 family. As to quaternary structure, associates with the respiratory chain complex III/complex IV supercomplex.

The protein resides in the mitochondrion membrane. In terms of biological role, cytochrome c oxidase subunit which plays a role in assembly of respiratory supercomplexes. The sequence is that of Respiratory supercomplex factor 1, mitochondrial (RCF1) from Candida glabrata (strain ATCC 2001 / BCRC 20586 / JCM 3761 / NBRC 0622 / NRRL Y-65 / CBS 138) (Yeast).